A 326-amino-acid chain; its full sequence is Probable cell division protein WhiA (326 aa).

The H-T-H motif DNA-binding region spans 275 to 308 (SLEELGQLADPPLTKDAIAGRIRRLLAMADKRAA).

This sequence belongs to the WhiA family.

In terms of biological role, involved in cell division and chromosome segregation. The chain is Probable cell division protein WhiA from Thermobifida fusca (strain YX).